A 468-amino-acid chain; its full sequence is ATP synthase subunit beta (468 aa).

Residue 148–155 (GGAGVGKT) participates in ATP binding.

It belongs to the ATPase alpha/beta chains family. As to quaternary structure, F-type ATPases have 2 components, CF(1) - the catalytic core - and CF(0) - the membrane proton channel. CF(1) has five subunits: alpha(3), beta(3), gamma(1), delta(1), epsilon(1). CF(0) has three main subunits: a(1), b(2) and c(9-12). The alpha and beta chains form an alternating ring which encloses part of the gamma chain. CF(1) is attached to CF(0) by a central stalk formed by the gamma and epsilon chains, while a peripheral stalk is formed by the delta and b chains.

It localises to the cell inner membrane. The catalysed reaction is ATP + H2O + 4 H(+)(in) = ADP + phosphate + 5 H(+)(out). Produces ATP from ADP in the presence of a proton gradient across the membrane. The catalytic sites are hosted primarily by the beta subunits. This is ATP synthase subunit beta from Stenotrophomonas maltophilia (strain R551-3).